The following is a 379-amino-acid chain: Chaperone protein DnaJ (379 aa).

The J domain maps to 7–72 (CYYETLEVER…DKRAAYDRYG (66 aa)). The CR-type zinc finger occupies 135–213 (GKTAQIEIPV…CTGSGRVTKE (79 aa)). Cysteine 148, cysteine 151, cysteine 165, cysteine 168, cysteine 187, cysteine 190, cysteine 201, and cysteine 204 together coordinate Zn(2+). CXXCXGXG motif repeat units lie at residues 148 to 155 (CEACSGTG), 165 to 172 (CSTCGGAG), 187 to 194 (CPSCQGRG), and 201 to 208 (CPSCTGSG).

The protein belongs to the DnaJ family. In terms of assembly, homodimer. Requires Zn(2+) as cofactor.

Its subcellular location is the cytoplasm. Its function is as follows. Participates actively in the response to hyperosmotic and heat shock by preventing the aggregation of stress-denatured proteins and by disaggregating proteins, also in an autonomous, DnaK-independent fashion. Unfolded proteins bind initially to DnaJ; upon interaction with the DnaJ-bound protein, DnaK hydrolyzes its bound ATP, resulting in the formation of a stable complex. GrpE releases ADP from DnaK; ATP binding to DnaK triggers the release of the substrate protein, thus completing the reaction cycle. Several rounds of ATP-dependent interactions between DnaJ, DnaK and GrpE are required for fully efficient folding. Also involved, together with DnaK and GrpE, in the DNA replication of plasmids through activation of initiation proteins. The protein is Chaperone protein DnaJ of Rhodopseudomonas palustris (strain ATCC BAA-98 / CGA009).